Consider the following 507-residue polypeptide: Photosystem II CP47 reaction center protein (507 aa).

Topologically, residues glycine 2–proline 16 are cytoplasmic. Residues glycine 17–leucine 39 traverse the membrane as a helical segment. At tyrosine 40–glutamate 94 the chain is on the lumenal, thylakoid side. The helical transmembrane segment at glycine 95–valine 116 threads the bilayer. The Cytoplasmic portion of the chain corresponds to phenylalanine 117–aspartate 134. The chain crosses the membrane as a helical span at residues leucine 135–threonine 159. Topologically, residues glycine 160–glycine 196 are lumenal, thylakoid. A helical transmembrane segment spans residues glycine 197 to threonine 218. At valine 219–asparagine 233 the chain is on the cytoplasmic side. A helical membrane pass occupies residues isoleucine 234–threonine 255. At methionine 256–tryptophan 450 the chain is on the lumenal, thylakoid side. Residues phenylalanine 451–leucine 474 traverse the membrane as a helical segment. Over phenylalanine 475–alanine 507 the chain is Cytoplasmic.

It belongs to the PsbB/PsbC family. PsbB subfamily. PSII is composed of 1 copy each of membrane proteins PsbA, PsbB, PsbC, PsbD, PsbE, PsbF, PsbH, PsbI, PsbJ, PsbK, PsbL, PsbM, PsbT, PsbX, Psb30/Ycf12, peripheral proteins PsbO, CyanoQ (PsbQ), PsbU, PsbV and a large number of cofactors. It forms dimeric complexes. Contacts PsbQ. Requires Binds multiple chlorophylls. PSII binds additional chlorophylls, carotenoids and specific lipids. as cofactor.

The protein resides in the cellular thylakoid membrane. Functionally, one of the components of the core complex of photosystem II (PSII). It binds chlorophyll and helps catalyze the primary light-induced photochemical processes of PSII. PSII is a light-driven water:plastoquinone oxidoreductase, using light energy to abstract electrons from H(2)O, generating O(2) and a proton gradient subsequently used for ATP formation. The protein is Photosystem II CP47 reaction center protein of Synechocystis sp. (strain ATCC 27184 / PCC 6803 / Kazusa).